A 493-amino-acid polypeptide reads, in one-letter code: E3 ubiquitin-protein ligase Hakai (493 aa).

2 disordered regions span residues 1-20 and 28-61; these read MDHN…LGGL and IKLI…GDEE. Residues 7–16 show a composition bias toward polar residues; the sequence is DLQGTNSSAS. The RING-type zinc-finger motif lies at 109-149; sequence CDKCGLPIKMYGRMIPCKHVFCYDCAILHEKKGDKMCPGCN. The tract at residues 148–206 is HYB domain; it reads CNEPVQRIEQCVRGSLFMCSIVQGCKRTYLSQRDLQAHINHRHMRAGKPVTRPPLEPVH. A C2H2-type zinc finger spans residues 164–190; sequence FMCSIVQGCKRTYLSQRDLQAHINHRH. The interval 253-493 is disordered; it reads YNQPHEDIRP…DQARYRPYYQ (241 aa). Pro residues-rich tracts occupy residues 262 to 276, 342 to 352, 372 to 389, and 399 to 412; these read PPPA…PPRP, APPPPPPPPIS, APPP…PPPG, and MNHP…PQHG. Over residues 427–444 the composition is skewed to polar residues; that stretch reads NPNSLPQFSEDQGTLSPP. Positions 459–469 are enriched in pro residues; the sequence is PRGPPPPPRMQ. The segment covering 470–480 has biased composition (low complexity); that stretch reads GPPAQAPLAGP.

It belongs to the Hakai family. In terms of assembly, homodimer. Interacts with tyrosine-phosphorylated SRC substrates. Component of the WMM complex, a N6-methyltransferase complex composed of a catalytic subcomplex, named MAC, and of an associated subcomplex, named MACOM. Component of the MACOM subcomplex.

The protein localises to the nucleus speckle. It localises to the nucleus. Its subcellular location is the nucleoplasm. It carries out the reaction S-ubiquitinyl-[E2 ubiquitin-conjugating enzyme]-L-cysteine + [acceptor protein]-L-lysine = [E2 ubiquitin-conjugating enzyme]-L-cysteine + N(6)-ubiquitinyl-[acceptor protein]-L-lysine.. The protein operates within protein modification; protein ubiquitination. Functionally, E3 ubiquitin-protein ligase that mediates ubiquitination of several tyrosine-phosphorylated Src substrates. Associated component of the WMM complex, a complex that mediates N6-methyladenosine (m6A) methylation of RNAs, a modification that plays a role in the efficiency of mRNA splicing and RNA processing. The chain is E3 ubiquitin-protein ligase Hakai from Gallus gallus (Chicken).